The following is a 100-amino-acid chain: MTPWFLYLIRTADNKLYTGITTDVERRYQQHQSGKGAKALRGKGELTLVFSAPVGDRSLALRAEYRVKQLTKRQKERLVAEGAGFAELLSSLQTPEIKSD.

The GIY-YIG domain maps to 2 to 77; that stretch reads TPWFLYLIRT…KQLTKRQKER (76 aa).

Belongs to the UPF0213 family.

This chain is UPF0213 protein YhbQ, found in Escherichia coli (strain K12 / MC4100 / BW2952).